The following is a 292-amino-acid chain: Tricin synthase 2 (292 aa).

The interval 21 to 46 (RTTPASRVSSTAMAAANGDASHGANG) is disordered. A compositionally biased stretch (polar residues) spans 23–32 (TPASRVSSTA). S-adenosyl-L-methionine contacts are provided by residues Ser108, Glu130, 132–133 (GV), Ser138, Asp156, and Ala185. Asp208 provides a ligand contact to a divalent metal cation. Asp210 is an S-adenosyl-L-methionine binding site. Residues Asp234 and Asn235 each contribute to the a divalent metal cation site.

This sequence belongs to the class I-like SAM-binding methyltransferase superfamily. Cation-dependent O-methyltransferase family. CCoAMT subfamily. Mg(2+) is required as a cofactor. The cofactor is Mn(2+). In terms of tissue distribution, expressed in stems only.

It carries out the reaction tricetin + 2 S-adenosyl-L-methionine = 3',5'-di-O-methyltricetin + 2 S-adenosyl-L-homocysteine + 2 H(+). In terms of biological role, catalyzes the stepwise methylation of tricetin to its 3'-mono- and 3',5'-dimethyl ethers. No 3',4',5'-trimethylated ester derivatives are produced. Can use caffeoyl CoA, 5-hydroxyferulic acid, luteolin, tricetin, quercetin, myrcetin and 7,8-dihydroxyflavone as substrates, but not naringenin, apigenin or kaempferol. The 2,3-double bond and the O-dihydroxyl group of the substrate are both required for catalytic activity of the enzyme. The sequence is that of Tricin synthase 2 (ROMT-17) from Oryza sativa subsp. japonica (Rice).